Reading from the N-terminus, the 85-residue chain is WAP four-disulfide core domain protein 12 (85 aa).

An N-terminal signal peptide occupies residues 1 to 21 (MWPNSILVLMTLLISSTLVTG). One can recognise a WAP domain in the interval 25 to 72 (KGEEKRVCPPDYVRCIRQDDPQCYSDNDCGDQEICCFWQCGFKCVLPV). Intrachain disulfides connect cysteine 32–cysteine 60, cysteine 39–cysteine 64, cysteine 47–cysteine 59, and cysteine 53–cysteine 68.

In terms of tissue distribution, constitutively expressed in tongue.

The protein resides in the secreted. In terms of biological role, antibacterial protein which inhibits the growth of E.coli and S.aureus. Putative acid-stable proteinase inhibitor. The polypeptide is WAP four-disulfide core domain protein 12 (Mus musculus (Mouse)).